The primary structure comprises 519 residues: Histidine--tRNA ligase, cytoplasmic (519 aa).

Residues 135-137, arginine 162, glutamine 178, aspartate 182, arginine 331, and 335-336 contribute to the L-histidine site; these read DLT and YY.

The protein belongs to the class-II aminoacyl-tRNA synthetase family. Homodimer.

It is found in the cytoplasm. The catalysed reaction is tRNA(His) + L-histidine + ATP = L-histidyl-tRNA(His) + AMP + diphosphate + H(+). Functionally, catalyzes the ATP-dependent ligation of histidine to the 3'-end of its cognate tRNA, via the formation of an aminoacyl-adenylate intermediate (His-AMP). Plays a role in axon guidance. The polypeptide is Histidine--tRNA ligase, cytoplasmic (hars1) (Takifugu rubripes (Japanese pufferfish)).